We begin with the raw amino-acid sequence, 229 residues long: Uracil-DNA glycosylase (229 aa).

Residue Asp65 is the Proton acceptor of the active site.

Belongs to the uracil-DNA glycosylase (UDG) superfamily. UNG family.

It localises to the cytoplasm. The catalysed reaction is Hydrolyzes single-stranded DNA or mismatched double-stranded DNA and polynucleotides, releasing free uracil.. Its function is as follows. Excises uracil residues from the DNA which can arise as a result of misincorporation of dUMP residues by DNA polymerase or due to deamination of cytosine. This chain is Uracil-DNA glycosylase, found in Oceanobacillus iheyensis (strain DSM 14371 / CIP 107618 / JCM 11309 / KCTC 3954 / HTE831).